The primary structure comprises 242 residues: Small ribosomal subunit protein uS7m (242 aa).

A mitochondrion-targeting transit peptide spans 1–37 (MAAPTAKVSRGWSGLALGVRIAVLRLPGLTQVRWSRY). Residue lysine 228 is modified to N6-acetyllysine.

It belongs to the universal ribosomal protein uS7 family. In terms of assembly, component of the mitochondrial ribosome small subunit (28S) which comprises a 12S rRNA and about 30 distinct proteins.

It is found in the mitochondrion. The chain is Small ribosomal subunit protein uS7m (MRPS7) from Bos taurus (Bovine).